The sequence spans 297 residues: Probable endonuclease 4 (297 aa).

Residues H69, H110, E145, D179, H182, H214, D227, H229, and E259 each coordinate Zn(2+).

Belongs to the AP endonuclease 2 family. Requires Zn(2+) as cofactor.

The enzyme catalyses Endonucleolytic cleavage to 5'-phosphooligonucleotide end-products.. Functionally, endonuclease IV plays a role in DNA repair. It cleaves phosphodiester bonds at apurinic or apyrimidinic (AP) sites, generating a 3'-hydroxyl group and a 5'-terminal sugar phosphate. In Listeria monocytogenes serotype 4b (strain F2365), this protein is Probable endonuclease 4.